Here is an 86-residue protein sequence, read N- to C-terminus: Exodeoxyribonuclease 7 small subunit (86 aa).

Residues 67 to 86 are disordered; it reads RVSPASGGATEAPAPAERDR.

It belongs to the XseB family. As to quaternary structure, heterooligomer composed of large and small subunits.

It is found in the cytoplasm. The catalysed reaction is Exonucleolytic cleavage in either 5'- to 3'- or 3'- to 5'-direction to yield nucleoside 5'-phosphates.. In terms of biological role, bidirectionally degrades single-stranded DNA into large acid-insoluble oligonucleotides, which are then degraded further into small acid-soluble oligonucleotides. The polypeptide is Exodeoxyribonuclease 7 small subunit (Beutenbergia cavernae (strain ATCC BAA-8 / DSM 12333 / CCUG 43141 / JCM 11478 / NBRC 16432 / NCIMB 13614 / HKI 0122)).